The chain runs to 557 residues: Dihydroxy-acid dehydratase (557 aa).

Aspartate 78 is a Mg(2+) binding site. Residue cysteine 119 coordinates [2Fe-2S] cluster. Aspartate 120 and lysine 121 together coordinate Mg(2+). Lysine 121 carries the N6-carboxylysine modification. Cysteine 192 provides a ligand contact to [2Fe-2S] cluster. Glutamate 442 is a binding site for Mg(2+). Serine 468 acts as the Proton acceptor in catalysis.

The protein belongs to the IlvD/Edd family. As to quaternary structure, homodimer. It depends on [2Fe-2S] cluster as a cofactor. The cofactor is Mg(2+).

The enzyme catalyses (2R)-2,3-dihydroxy-3-methylbutanoate = 3-methyl-2-oxobutanoate + H2O. It carries out the reaction (2R,3R)-2,3-dihydroxy-3-methylpentanoate = (S)-3-methyl-2-oxopentanoate + H2O. It functions in the pathway amino-acid biosynthesis; L-isoleucine biosynthesis; L-isoleucine from 2-oxobutanoate: step 3/4. It participates in amino-acid biosynthesis; L-valine biosynthesis; L-valine from pyruvate: step 3/4. Its function is as follows. Functions in the biosynthesis of branched-chain amino acids. Catalyzes the dehydration of (2R,3R)-2,3-dihydroxy-3-methylpentanoate (2,3-dihydroxy-3-methylvalerate) into 2-oxo-3-methylpentanoate (2-oxo-3-methylvalerate) and of (2R)-2,3-dihydroxy-3-methylbutanoate (2,3-dihydroxyisovalerate) into 2-oxo-3-methylbutanoate (2-oxoisovalerate), the penultimate precursor to L-isoleucine and L-valine, respectively. This Bacillus cereus (strain ATCC 10987 / NRS 248) protein is Dihydroxy-acid dehydratase.